Consider the following 469-residue polypeptide: Glutamate--tRNA ligase (469 aa).

Positions 11–21 (PSPTGFIHLGN) match the 'HIGH' region motif. A compositionally biased stretch (basic and acidic residues) spans 118–131 (GEKPRYDGTWRPEP). The tract at residues 118–139 (GEKPRYDGTWRPEPGKVLPEPP) is disordered. The 'KMSKS' region motif lies at 243 to 247 (KMSKR). Lysine 246 is a binding site for ATP.

It belongs to the class-I aminoacyl-tRNA synthetase family. Glutamate--tRNA ligase type 1 subfamily. As to quaternary structure, monomer.

The protein localises to the cytoplasm. The catalysed reaction is tRNA(Glu) + L-glutamate + ATP = L-glutamyl-tRNA(Glu) + AMP + diphosphate. Its function is as follows. Catalyzes the attachment of glutamate to tRNA(Glu) in a two-step reaction: glutamate is first activated by ATP to form Glu-AMP and then transferred to the acceptor end of tRNA(Glu). The protein is Glutamate--tRNA ligase of Burkholderia pseudomallei (strain 668).